A 190-amino-acid polypeptide reads, in one-letter code: Peptide methionine sulfoxide reductase MsrA (190 aa).

Cysteine 21 is a catalytic residue.

This sequence belongs to the MsrA Met sulfoxide reductase family.

It catalyses the reaction L-methionyl-[protein] + [thioredoxin]-disulfide + H2O = L-methionyl-(S)-S-oxide-[protein] + [thioredoxin]-dithiol. The catalysed reaction is [thioredoxin]-disulfide + L-methionine + H2O = L-methionine (S)-S-oxide + [thioredoxin]-dithiol. Functionally, has an important function as a repair enzyme for proteins that have been inactivated by oxidation. Catalyzes the reversible oxidation-reduction of methionine sulfoxide in proteins to methionine. This Polynucleobacter asymbioticus (strain DSM 18221 / CIP 109841 / QLW-P1DMWA-1) (Polynucleobacter necessarius subsp. asymbioticus) protein is Peptide methionine sulfoxide reductase MsrA.